The following is a 444-amino-acid chain: MRNIIYFILSLLFSVTSYALETINIEHGRADPTPIAVNKFDADNSAADVLGHDMVKVISNDLKLSGLFRPISAASFIEEKTGIEYKPLFAAWRQINASLLVNGEVKKLESGKFKVSFILWDTLLEKQLAGEMLEVPKNLWRRAAHKIADKIYEKITGDAGYFDTKIVYVSESSSLPKIKRIALMDYDGANNKYLTNGKSLVLTPRFARSADKIFYVSYATKRRVLVYEKDLKTGKESVVGDFPGISFAPRFSPDGRKAVMSIAKNGSTHIYEIDLATKRLHKLTDGFGINTSPSYSPDGKKIVYNSDRNGVPQLYIMNSDGSDVQRISFGGGSYAAPSWSPRGDYIAFTKITKGDGGKTFNIGIMKACPQDDENSEKIITSGYLVESPCWSPNGRVIMFAKGWPSSAKAPGKNKIFAIDLTGHNEREIMTPADASDPEWSGVLN.

Residues 1–19 (MRNIIYFILSLLFSVTSYA) form the signal peptide.

Belongs to the TolB family. As to quaternary structure, the Tol-Pal system is composed of five core proteins: the inner membrane proteins TolA, TolQ and TolR, the periplasmic protein TolB and the outer membrane protein Pal. They form a network linking the inner and outer membranes and the peptidoglycan layer.

It is found in the periplasm. In terms of biological role, part of the Tol-Pal system, which plays a role in outer membrane invagination during cell division and is important for maintaining outer membrane integrity. In Rickettsia africae (strain ESF-5), this protein is Tol-Pal system protein TolB.